A 202-amino-acid polypeptide reads, in one-letter code: dITP/XTP pyrophosphatase (202 aa).

Substrate is bound at residue 11–16 (TNNANK). Catalysis depends on Asp-73, which acts as the Proton acceptor. Residue Asp-73 coordinates Mg(2+). Substrate contacts are provided by residues Ser-74, 155 to 158 (FGYD), Lys-178, and 183 to 184 (HR).

The protein belongs to the HAM1 NTPase family. Homodimer. It depends on Mg(2+) as a cofactor.

It carries out the reaction XTP + H2O = XMP + diphosphate + H(+). The catalysed reaction is dITP + H2O = dIMP + diphosphate + H(+). The enzyme catalyses ITP + H2O = IMP + diphosphate + H(+). Pyrophosphatase that catalyzes the hydrolysis of nucleoside triphosphates to their monophosphate derivatives, with a high preference for the non-canonical purine nucleotides XTP (xanthosine triphosphate), dITP (deoxyinosine triphosphate) and ITP. Seems to function as a house-cleaning enzyme that removes non-canonical purine nucleotides from the nucleotide pool, thus preventing their incorporation into DNA/RNA and avoiding chromosomal lesions. This is dITP/XTP pyrophosphatase from Lactiplantibacillus plantarum (strain ATCC BAA-793 / NCIMB 8826 / WCFS1) (Lactobacillus plantarum).